Consider the following 873-residue polypeptide: Serine/threonine-protein phosphatase 4 regulatory subunit 4 (873 aa).

HEAT repeat units follow at residues 213–251 (ILPL…TKSV), 252–290 (VLPE…RSQT), and 392–427 (NFHM…SKLL). Residues 686 to 720 (QKKFYEKDLLDQEKEREELLLLEMEQLEKEKQQND) adopt a coiled-coil conformation. A compositionally biased stretch (basic and acidic residues) spans 713–737 (EKEKQQNDGRPMSDKMFEKKRRDTK). The segment at 713 to 766 (EKEKQQNDGRPMSDKMFEKKRRDTKTPTQSLPKNIPISVPGPSSVTPSTSKEIK) is disordered. Residues 747–762 (IPISVPGPSSVTPSTS) are compositionally biased toward low complexity. Phosphoserine is present on serine 775. Threonine 797 is subject to Phosphothreonine. The segment covering 822–858 (TRNASSVPSSFSPNTPLPSTSRGTGNSVDPKSSGSKD) has biased composition (polar residues). Positions 822–873 (TRNASSVPSSFSPNTPLPSTSRGTGNSVDPKSSGSKDTQPRKATLKSRKSNP) are disordered. Residues 864-873 (ATLKSRKSNP) are compositionally biased toward basic residues.

As to quaternary structure, serine/threonine-protein phosphatase 4 (PP4) occurs in different assemblies of the catalytic and one or more regulatory subunits. Component of the PP4 complex PPP4C-PPP4R4.

The protein resides in the cytoplasm. Its function is as follows. Putative regulatory subunit of serine/threonine-protein phosphatase 4. In Homo sapiens (Human), this protein is Serine/threonine-protein phosphatase 4 regulatory subunit 4 (PPP4R4).